Reading from the N-terminus, the 490-residue chain is Apocarotenoid-15,15'-oxygenase (490 aa).

H183 provides a ligand contact to Fe cation. S206 is a binding site for substrate. H238 serves as a coordination point for Fe cation. F303 contacts substrate. Positions 304 and 484 each coordinate Fe cation.

The protein belongs to the carotenoid oxygenase family. The cofactor is Fe(2+).

It carries out the reaction all-trans-8'-apo-beta-carotenal + O2 = (2E,4E,6E)-2,6-dimethylocta-2,4,6-trienedial + all-trans-retinal. In terms of biological role, cleaves a number of carotenals and carotenols in the all-trans configuration at the 15-15' double bond producing retinal or retinol, respectively. Also shows activity toward lycopenals and the corresponding alcohols. Does not cleave beta-carotene or lycopene. This Synechocystis sp. (strain ATCC 27184 / PCC 6803 / Kazusa) protein is Apocarotenoid-15,15'-oxygenase.